Reading from the N-terminus, the 348-residue chain is D-alanine--D-alanine ligase (348 aa).

One can recognise an ATP-grasp domain in the interval 132–334; that stretch reads KRVLESIGIP…YPDLIEELVT (203 aa). Residue 162 to 217 coordinates ATP; sequence LARLTFPIFVKPANMGSSVGISKAQTKVELRKAIQLALTYDSRVLIEQGVVAREIE. Mg(2+) contacts are provided by Asp-288, Glu-301, and Asn-303.

It belongs to the D-alanine--D-alanine ligase family. Mg(2+) serves as cofactor. Mn(2+) is required as a cofactor.

Its subcellular location is the cytoplasm. The catalysed reaction is 2 D-alanine + ATP = D-alanyl-D-alanine + ADP + phosphate + H(+). The protein operates within cell wall biogenesis; peptidoglycan biosynthesis. Functionally, cell wall formation. This Streptococcus pyogenes serotype M3 (strain SSI-1) protein is D-alanine--D-alanine ligase.